A 476-amino-acid chain; its full sequence is Methylenetetrahydrofolate--tRNA-(uracil-5-)-methyltransferase TrmFO (476 aa).

Residue 14 to 19 (GGGLAG) participates in FAD binding. Residues 428–447 (LTEPPTHGADGKKLRGPEKS) are disordered. A compositionally biased stretch (basic and acidic residues) spans 436-447 (ADGKKLRGPEKS).

Belongs to the MnmG family. TrmFO subfamily. Requires FAD as cofactor.

It localises to the cytoplasm. The enzyme catalyses uridine(54) in tRNA + (6R)-5,10-methylene-5,6,7,8-tetrahydrofolate + NADH + H(+) = 5-methyluridine(54) in tRNA + (6S)-5,6,7,8-tetrahydrofolate + NAD(+). The catalysed reaction is uridine(54) in tRNA + (6R)-5,10-methylene-5,6,7,8-tetrahydrofolate + NADPH + H(+) = 5-methyluridine(54) in tRNA + (6S)-5,6,7,8-tetrahydrofolate + NADP(+). In terms of biological role, catalyzes the folate-dependent formation of 5-methyl-uridine at position 54 (M-5-U54) in all tRNAs. The chain is Methylenetetrahydrofolate--tRNA-(uracil-5-)-methyltransferase TrmFO from Rhodopseudomonas palustris (strain BisA53).